Here is a 376-residue protein sequence, read N- to C-terminus: Serpin B6 (376 aa).

Methionine 1 carries the N-acetylmethionine modification. Serine 151 carries the post-translational modification Phosphoserine. Lysine 195 is subject to N6-acetyllysine.

The protein belongs to the serpin family. Ov-serpin subfamily. Forms a complex with the monomeric form of beta-tryptase.

The protein resides in the cytoplasm. Functionally, inhibitor of cathepsin G, kallikrein-8 and thrombin. May play an important role in the inner ear in the protection against leakage of lysosomal content during stress. May be involved in the regulation of serine proteinases present in the brain or extravasated from the blood. The protein is Serpin B6 (SERPINB6) of Macaca fascicularis (Crab-eating macaque).